A 640-amino-acid polypeptide reads, in one-letter code: Fructose-1,6-bisphosphatase class 3 (640 aa).

This sequence belongs to the FBPase class 3 family. Requires Mn(2+) as cofactor.

The enzyme catalyses beta-D-fructose 1,6-bisphosphate + H2O = beta-D-fructose 6-phosphate + phosphate. It participates in carbohydrate biosynthesis; gluconeogenesis. This is Fructose-1,6-bisphosphatase class 3 from Lactococcus lactis subsp. cremoris (strain MG1363).